The chain runs to 747 residues: Polyribonucleotide nucleotidyltransferase (747 aa).

The Mg(2+) site is built by Asp-502 and Asp-508. Residues 569–628 (PRMLTITIDPDKIRDIIGPGGKIIKKIIEETGVEIDVEDDGRVFIASTDAAAGERALKII) form the KH domain. Residues 638 to 712 (GKVYNGKVTR…PQGRLKLSRK (75 aa)) form the S1 motif domain. Residues 718-747 (STVGEGGHRHFRRAGREGGHRGLNNRRQSR) are disordered.

It belongs to the polyribonucleotide nucleotidyltransferase family. Mg(2+) serves as cofactor.

The protein resides in the cytoplasm. The enzyme catalyses RNA(n+1) + phosphate = RNA(n) + a ribonucleoside 5'-diphosphate. Involved in mRNA degradation. Catalyzes the phosphorolysis of single-stranded polyribonucleotides processively in the 3'- to 5'-direction. The chain is Polyribonucleotide nucleotidyltransferase from Moorella thermoacetica (strain ATCC 39073 / JCM 9320).